Reading from the N-terminus, the 65-residue chain is MPKMKTHRGAAKRFKKTGSGKLKRAKAFKSHILTKKSSKTKRNLRKSGLVSEAQEKVMKKLLPYL.

Residues 1-26 form a disordered region; the sequence is MPKMKTHRGAAKRFKKTGSGKLKRAK.

This sequence belongs to the bacterial ribosomal protein bL35 family.

This chain is Large ribosomal subunit protein bL35, found in Clostridium novyi (strain NT).